A 495-amino-acid chain; its full sequence is Trigger factor (495 aa).

One can recognise a PPIase FKBP-type domain in the interval 162 to 243 (DDFVSIDLSA…VKSLKERELP (82 aa)). The span at 425-437 (DTDGNEIDPKEYF) shows a compositional bias: basic and acidic residues. A disordered region spans residues 425-495 (DTDGNEIDPK…TDDDSENAEK (71 aa)). The segment covering 450-461 (SADAEASENSEA) has biased composition (low complexity). Over residues 486 to 495 (TDDDSENAEK) the composition is skewed to acidic residues.

It belongs to the FKBP-type PPIase family. Tig subfamily.

The protein resides in the cytoplasm. The enzyme catalyses [protein]-peptidylproline (omega=180) = [protein]-peptidylproline (omega=0). Functionally, involved in protein export. Acts as a chaperone by maintaining the newly synthesized protein in an open conformation. Functions as a peptidyl-prolyl cis-trans isomerase. This Corynebacterium kroppenstedtii (strain DSM 44385 / JCM 11950 / CIP 105744 / CCUG 35717) protein is Trigger factor.